The primary structure comprises 242 residues: MRSGVIAQKIGMTRVYNETGEHIPVTVLRMENCQVVAQRTEEKNGYTAVQLGVGLAKVKNTSKALRGHFAAASVEPKAKVAEFRVSPENLLDVGAEITADHFVPGQKVDVTGTSIGKGFQGVMKRHNFGGGRATHGNSVSHRTHGSTGQRQDPGKVFKGKKMAGHMGDRRVTTQNLEVVSTDTERGLILVRGAVPGSKGSWIMVRDAVKAPLPKEAPLPAAIRASNNNAEKAAATAAGEGAE.

The segment at 131–165 (GRATHGNSVSHRTHGSTGQRQDPGKVFKGKKMAGH) is disordered. Positions 135 to 150 (HGNSVSHRTHGSTGQR) are enriched in polar residues. At Gln-151 the chain carries N5-methylglutamine.

It belongs to the universal ribosomal protein uL3 family. As to quaternary structure, part of the 50S ribosomal subunit. Forms a cluster with proteins L14 and L19. Methylated by PrmB.

Its function is as follows. One of the primary rRNA binding proteins, it binds directly near the 3'-end of the 23S rRNA, where it nucleates assembly of the 50S subunit. This is Large ribosomal subunit protein uL3 from Chelativorans sp. (strain BNC1).